The chain runs to 311 residues: p-hydroxybenzoic acid efflux pump subunit AaeA (311 aa).

Residues 11–31 (VGITVLVVVLAVIAIFNVWAF) form a helical membrane-spanning segment.

The protein belongs to the membrane fusion protein (MFP) (TC 8.A.1) family.

It is found in the cell inner membrane. Forms an efflux pump with AaeB. This Yersinia pseudotuberculosis serotype O:1b (strain IP 31758) protein is p-hydroxybenzoic acid efflux pump subunit AaeA.